Consider the following 745-residue polypeptide: 1,4-alpha-glucan branching enzyme GlgB (745 aa).

Catalysis depends on aspartate 416, which acts as the Nucleophile. Glutamate 469 serves as the catalytic Proton donor.

The protein belongs to the glycosyl hydrolase 13 family. GlgB subfamily. As to quaternary structure, monomer.

It carries out the reaction Transfers a segment of a (1-&gt;4)-alpha-D-glucan chain to a primary hydroxy group in a similar glucan chain.. It participates in glycan biosynthesis; glycogen biosynthesis. Functionally, catalyzes the formation of the alpha-1,6-glucosidic linkages in glycogen by scission of a 1,4-alpha-linked oligosaccharide from growing alpha-1,4-glucan chains and the subsequent attachment of the oligosaccharide to the alpha-1,6 position. In Shewanella sp. (strain MR-7), this protein is 1,4-alpha-glucan branching enzyme GlgB.